Consider the following 441-residue polypeptide: tRNA modification GTPase MnmE (441 aa).

Residues R24, E81, and K121 each contribute to the (6S)-5-formyl-5,6,7,8-tetrahydrofolate site. The 149-residue stretch at 218–366 (GMVVAIAGPP…LLRELTRFAA (149 aa)) folds into the TrmE-type G domain. GTP contacts are provided by residues 228–233 (NVGKST), 247–253 (SPHAGTT), and 272–275 (DTAG). S232 and T253 together coordinate Mg(2+). K441 provides a ligand contact to (6S)-5-formyl-5,6,7,8-tetrahydrofolate.

It belongs to the TRAFAC class TrmE-Era-EngA-EngB-Septin-like GTPase superfamily. TrmE GTPase family. In terms of assembly, homodimer. Heterotetramer of two MnmE and two MnmG subunits. The cofactor is K(+).

It localises to the cytoplasm. Its function is as follows. Exhibits a very high intrinsic GTPase hydrolysis rate. Involved in the addition of a carboxymethylaminomethyl (cmnm) group at the wobble position (U34) of certain tRNAs, forming tRNA-cmnm(5)s(2)U34. This is tRNA modification GTPase MnmE from Rhodopseudomonas palustris (strain ATCC BAA-98 / CGA009).